The chain runs to 127 residues: Large ribosomal subunit protein uL22 (127 aa).

This sequence belongs to the universal ribosomal protein uL22 family. As to quaternary structure, part of the 50S ribosomal subunit.

This protein binds specifically to 23S rRNA; its binding is stimulated by other ribosomal proteins, e.g. L4, L17, and L20. It is important during the early stages of 50S assembly. It makes multiple contacts with different domains of the 23S rRNA in the assembled 50S subunit and ribosome. Functionally, the globular domain of the protein is located near the polypeptide exit tunnel on the outside of the subunit, while an extended beta-hairpin is found that lines the wall of the exit tunnel in the center of the 70S ribosome. This is Large ribosomal subunit protein uL22 from Brucella suis (strain ATCC 23445 / NCTC 10510).